A 244-amino-acid chain; its full sequence is MSDPAPEIEAPVEAAPVASPPKGKKEKAPKAPKSPKAEKPKSDKPKKPKVAPTHPPVSEMVVNAVTTLKERGGSSLIAIKKFVAAQYKVDVEKLVPFIKKFLKSSVAKGTLLQAKGKGASGSFKLPPAAKKVEKKPKKVPSTPKPKTTKPKRVTGEKKVVKKPAAKKPEAKKATKAAKPATKKVVAKPASKKAAAPKPKAAKPAAKKPEAKKATKAAAKKPVAKPVAKKPAAKPAKKPAAKKAK.

Over residues 1–21 the composition is skewed to low complexity; that stretch reads MSDPAPEIEAPVEAAPVASPP. Disordered stretches follow at residues 1 to 59 and 113 to 244; these read MSDP…PVSE and QAKG…KKAK. A compositionally biased stretch (basic and acidic residues) spans 35-45; sequence PKAEKPKSDKP. Residues 53–127 form the H15 domain; the sequence is THPPVSEMVV…GASGSFKLPP (75 aa). Residues 186–203 are compositionally biased toward low complexity; sequence AKPASKKAAAPKPKAAKP. Residues 213–244 show a composition bias toward basic residues; the sequence is ATKAAAKKPVAKPVAKKPAAKPAKKPAAKKAK.

Belongs to the histone H1/H5 family.

It is found in the nucleus. The protein localises to the chromosome. Histones H1 are necessary for the condensation of nucleosome chains into higher-order structures. This Chironomus thummi thummi (Midge) protein is Histone H1, orphon.